The primary structure comprises 378 residues: T-cell immunoglobulin and mucin domain-containing protein 4 (378 aa).

An N-terminal signal peptide occupies residues 1–24 (MSKEPLILWLMIEFWWLYLTPVTS). Residues 25–126 (ETVVTEVLGH…PGWFNDVKIN (102 aa)) enclose the Ig-like V-type domain. The Extracellular segment spans residues 25–314 (ETVVTEVLGH…SMKNEMPISQ (290 aa)). Intrachain disulfides connect cysteine 40/cysteine 112, cysteine 53/cysteine 64, and cysteine 59/cysteine 111. 2 disordered regions span residues 136–160 (TTTHRTATTTTRRTTTTSPTTTRQM) and 269–304 (WKTSDSVSSPQPGASDTAVPEQNKTTKTGQMDGIPM). Residues 269–297 (WKTSDSVSSPQPGASDTAVPEQNKTTKTG) are compositionally biased toward polar residues. Asparagine 291 carries an N-linked (GlcNAc...) asparagine glycan. A helical membrane pass occupies residues 315 to 335 (LLMIIAPSLGFVLFALFVAFL). Residues 336-378 (LRGKLMETYCSQKHTRLDYIGDSKNVLNDVQHGREDEDGLFTL) lie on the Cytoplasmic side of the membrane. A Phosphoserine modification is found at serine 358.

This sequence belongs to the immunoglobulin superfamily. TIM family. In terms of assembly, interacts with MERTK; this interaction enhances TIMD4-mediated efferocytosis. Interacts with EPHA2.

Its subcellular location is the cell membrane. It localises to the secreted. The protein resides in the extracellular exosome. In terms of biological role, phosphatidylserine receptor that plays different role in immune response including phagocytosis of apoptotic cells and T-cell regulation. Controls T-cell activation in a bimodal fashion, decreasing the activation of naive T-cells by inducing cell cycle arrest, while increasing proliferation of activated T-cells by activating AKT1 and ERK1/2 phosphorylations and subsequent signaling pathways. Also plays a role in efferocytosis which is the process by which apoptotic cells are removed by phagocytic cells. Mechanistically, promotes the engulfment of apoptotic cells or exogenous particles by securing them to phagocytes through direct binding to phosphatidylserine present on apoptotic cells, while other engulfment receptors such as MERTK efficiently recognize apoptotic cells and mediate their ingestion. Additionally, promotes autophagy process by suppressing NLRP3 inflammasome activity via activation of LKB1/PRKAA1 pathway in a phosphatidylserine-dependent mechanism. Functionally, (Microbial infection) Plays a positive role in exosome-mediated trafficking of HIV-1 virus and its entry into immune cells. The chain is T-cell immunoglobulin and mucin domain-containing protein 4 (TIMD4) from Homo sapiens (Human).